A 217-amino-acid polypeptide reads, in one-letter code: Nascent polypeptide-associated complex subunit alpha (217 aa).

Residues 1 to 45 are disordered; sequence MPELTEIKSEAAPSTSAEAKPEDVRVEDDGSDSDSDGGMPGLEEA. A compositionally biased stretch (basic and acidic residues) spans 19–28; the sequence is AKPEDVRVED. An NAC-A/B domain is found at 70–135; it reads SRGEKKARKI…AKIEDLSQQA (66 aa). The interval 154 to 177 is disordered; sequence SVGATTSVAPIAEEDEEDVDDTGV. Residues 165–176 show a composition bias toward acidic residues; the sequence is AEEDEEDVDDTG. The 41-residue stretch at 177–217 folds into the UBA domain; it reads VDEKDIELVITQANTTRAKAIKALKNNNNDIVNAIMELTML.

It belongs to the NAC-alpha family. Part of the nascent polypeptide-associated complex (NAC), consisting of Nac-alpha and bicaudal (bic).

May promote appropriate targeting of ribosome-nascent polypeptide complexes. Required for correct localization of the osk/oskar protein to the posterior pole during embryonic development. The osk protein directs the recruitment of molecules responsible for posterior body patterning and germline formation in the embryo. This Drosophila melanogaster (Fruit fly) protein is Nascent polypeptide-associated complex subunit alpha (Nacalpha).